Here is a 339-residue protein sequence, read N- to C-terminus: tRNA N6-adenosine threonylcarbamoyltransferase (339 aa).

Fe cation contacts are provided by H117 and H121. Residues 140-144, D173, G186, and N279 each bind substrate; that span reads VVSGG. A Fe cation-binding site is contributed by D307.

This sequence belongs to the KAE1 / TsaD family. Requires Fe(2+) as cofactor.

The protein resides in the cytoplasm. It catalyses the reaction L-threonylcarbamoyladenylate + adenosine(37) in tRNA = N(6)-L-threonylcarbamoyladenosine(37) in tRNA + AMP + H(+). Functionally, required for the formation of a threonylcarbamoyl group on adenosine at position 37 (t(6)A37) in tRNAs that read codons beginning with adenine. Is involved in the transfer of the threonylcarbamoyl moiety of threonylcarbamoyl-AMP (TC-AMP) to the N6 group of A37, together with TsaE and TsaB. TsaD likely plays a direct catalytic role in this reaction. The polypeptide is tRNA N6-adenosine threonylcarbamoyltransferase (Syntrophomonas wolfei subsp. wolfei (strain DSM 2245B / Goettingen)).